Reading from the N-terminus, the 240-residue chain is Triosephosphate isomerase (240 aa).

8-10 (NWK) is a binding site for substrate. H93 acts as the Electrophile in catalysis. E160 acts as the Proton acceptor in catalysis. G166 contacts substrate.

The protein belongs to the triosephosphate isomerase family. Homodimer.

Its subcellular location is the cytoplasm. It carries out the reaction D-glyceraldehyde 3-phosphate = dihydroxyacetone phosphate. Its pathway is carbohydrate biosynthesis; gluconeogenesis. It participates in carbohydrate degradation; glycolysis; D-glyceraldehyde 3-phosphate from glycerone phosphate: step 1/1. Its function is as follows. Involved in the gluconeogenesis. Catalyzes stereospecifically the conversion of dihydroxyacetone phosphate (DHAP) to D-glyceraldehyde-3-phosphate (G3P). The chain is Triosephosphate isomerase from Ehrlichia chaffeensis (strain ATCC CRL-10679 / Arkansas).